A 253-amino-acid chain; its full sequence is Tetraspanin-3 (253 aa).

The Cytoplasmic portion of the chain corresponds to 1-11; that stretch reads MGQCGITSSKT. A helical membrane pass occupies residues 12-32; that stretch reads VLVFLNLIFWGAAGILCYVGA. Residues 33–50 are Extracellular-facing; the sequence is YVFITYDDYDHFFEDVYT. Residues 51–71 form a helical membrane-spanning segment; that stretch reads LFPAVVIIAVGALLFIIGLIG. Topologically, residues 72–85 are cytoplasmic; that stretch reads CCATIRESRCGLAT. A helical membrane pass occupies residues 86–106; it reads FVFILLLVFVTEVVVVVLGYV. Topologically, residues 107-212 are extracellular; that stretch reads YRAKVENEVD…KKLQEILMHV (106 aa). Asn127, Asn152, Asn167, and Asn183 each carry an N-linked (GlcNAc...) asparagine glycan. A helical membrane pass occupies residues 213–233; the sequence is IWAALAFAAIQLLGMLCACIV. Topologically, residues 234 to 253 are cytoplasmic; the sequence is LCRRSRDPAYELLITGGTYA.

This sequence belongs to the tetraspanin (TM4SF) family. In terms of assembly, interacts with claudin-11/CLDN11 and integrins.

The protein resides in the membrane. In terms of biological role, regulates the proliferation and migration of oligodendrocytes, a process essential for normal myelination and repair. The protein is Tetraspanin-3 (Tspan3) of Mus musculus (Mouse).